We begin with the raw amino-acid sequence, 607 residues long: Elongation factor 4 (607 aa).

The tr-type G domain maps to 11–193 (KKIRNFSIIA…QIVELVPPPT (183 aa)). Residues 23–28 (DHGKST) and 140–143 (NKID) contribute to the GTP site.

The protein belongs to the TRAFAC class translation factor GTPase superfamily. Classic translation factor GTPase family. LepA subfamily.

The protein localises to the cell membrane. The catalysed reaction is GTP + H2O = GDP + phosphate + H(+). In terms of biological role, required for accurate and efficient protein synthesis under certain stress conditions. May act as a fidelity factor of the translation reaction, by catalyzing a one-codon backward translocation of tRNAs on improperly translocated ribosomes. Back-translocation proceeds from a post-translocation (POST) complex to a pre-translocation (PRE) complex, thus giving elongation factor G a second chance to translocate the tRNAs correctly. Binds to ribosomes in a GTP-dependent manner. In Exiguobacterium sp. (strain ATCC BAA-1283 / AT1b), this protein is Elongation factor 4.